Reading from the N-terminus, the 426-residue chain is Formate-dependent phosphoribosylglycinamide formyltransferase (426 aa).

N(1)-(5-phospho-beta-D-ribosyl)glycinamide-binding positions include 26–27 and Glu-86; that span reads EL. Residues Arg-118, Lys-158, 197–200, and Glu-205 each bind ATP; that span reads EEFI. Residues 123–324 enclose the ATP-grasp domain; that stretch reads EAIASTGART…EFALHAKAVL (202 aa). Positions 279 and 293 each coordinate Mg(2+). Residues Asp-300, Lys-374, and 381–382 each bind N(1)-(5-phospho-beta-D-ribosyl)glycinamide; that span reads RR.

It belongs to the PurK/PurT family. As to quaternary structure, homodimer.

It catalyses the reaction N(1)-(5-phospho-beta-D-ribosyl)glycinamide + formate + ATP = N(2)-formyl-N(1)-(5-phospho-beta-D-ribosyl)glycinamide + ADP + phosphate + H(+). The protein operates within purine metabolism; IMP biosynthesis via de novo pathway; N(2)-formyl-N(1)-(5-phospho-D-ribosyl)glycinamide from N(1)-(5-phospho-D-ribosyl)glycinamide (formate route): step 1/1. In terms of biological role, involved in the de novo purine biosynthesis. Catalyzes the transfer of formate to 5-phospho-ribosyl-glycinamide (GAR), producing 5-phospho-ribosyl-N-formylglycinamide (FGAR). Formate is provided by PurU via hydrolysis of 10-formyl-tetrahydrofolate. This Methanocella arvoryzae (strain DSM 22066 / NBRC 105507 / MRE50) protein is Formate-dependent phosphoribosylglycinamide formyltransferase.